We begin with the raw amino-acid sequence, 455 residues long: UDP-N-acetylmuramoylalanine--D-glutamate ligase (455 aa).

An ATP-binding site is contributed by 118-124; it reads GSNAKST.

Belongs to the MurCDEF family.

The protein resides in the cytoplasm. It carries out the reaction UDP-N-acetyl-alpha-D-muramoyl-L-alanine + D-glutamate + ATP = UDP-N-acetyl-alpha-D-muramoyl-L-alanyl-D-glutamate + ADP + phosphate + H(+). Its pathway is cell wall biogenesis; peptidoglycan biosynthesis. In terms of biological role, cell wall formation. Catalyzes the addition of glutamate to the nucleotide precursor UDP-N-acetylmuramoyl-L-alanine (UMA). This Chromohalobacter salexigens (strain ATCC BAA-138 / DSM 3043 / CIP 106854 / NCIMB 13768 / 1H11) protein is UDP-N-acetylmuramoylalanine--D-glutamate ligase.